Consider the following 468-residue polypeptide: Putative magnesium transporter MRS2-G (468 aa).

Disordered stretches follow at residues 1 to 76 and 183 to 204; these read MGRR…AGKV and GQPG…QVPR. Composition is skewed to low complexity over residues 14–23 and 31–45; these read ASNASTSSST and RLPS…SSPS. The span at 46 to 67 shows a compositional bias: pro residues; it reads PASPSPPPPSASHPAPPSPPLA. The segment covering 187–201 has biased composition (basic and acidic residues); that stretch reads GDDHGEKHDDSHGDQ. The next 2 helical transmembrane spans lie at 402 to 422 and 437 to 457; these read LTLT…GAFA and FFWP…IVLL.

Belongs to the CorA metal ion transporter (MIT) (TC 1.A.35.5) family. In terms of assembly, interacts with CYCB2-2.

The protein resides in the membrane. Putative magnesium transporter. This Oryza sativa subsp. japonica (Rice) protein is Putative magnesium transporter MRS2-G (MRS2-G).